A 664-amino-acid chain; its full sequence is Intraflagellar transport protein 70B (664 aa).

7 TPR repeats span residues 11-44, 45-78, 153-186, 188-220, 385-418, 423-456, and 458-491; these read DGEF…SPRS, RAGL…HPEL, YDGQ…SGYQ, DISY…GIRQ, LTEQ…YDET, IPVL…CNDH, and VWKL…NYDN. The stretch at 507 to 534 forms a coiled coil; sequence YIMTSQNEEAEELMRKIEKEEEQLSYDD. The stretch at 543 to 576 is one TPR 8 repeat; it reads CIVNLVIGTLYCAKGNYDFGISRVIKSLEPYHKK.

Belongs to the TTC30/dfy-1/fleer family. As to quaternary structure, interacts with the IFT B complex components IFT27, IFT46, IFT74, IFT52, IFT57, IFT80, IFT81 and IFT88. Interacts with KIF17.

It localises to the cell projection. It is found in the cilium. Functionally, required for polyglutamylation of axonemal tubulin. Plays a role in anterograde intraflagellar transport (IFT), the process by which cilia precursors are transported from the base of the cilium to the site of their incorporation at the tip. In Rattus norvegicus (Rat), this protein is Intraflagellar transport protein 70B (Ift70b).